The chain runs to 251 residues: Flap endonuclease Xni (251 aa).

Asp104 lines the Mg(2+) pocket. The 5'-3' exonuclease domain maps to 160 to 250; the sequence is VLPRQLPDYW…SGNLQQLRLK (91 aa). Residues Leu171, Ala172, Pro180, Val182, and Val185 each coordinate K(+). The interval 184 to 189 is interaction with DNA; the sequence is GVGAKT.

This sequence belongs to the Xni family. Requires Mg(2+) as cofactor. It depends on K(+) as a cofactor.

In terms of biological role, has flap endonuclease activity. During DNA replication, flap endonucleases cleave the 5'-overhanging flap structure that is generated by displacement synthesis when DNA polymerase encounters the 5'-end of a downstream Okazaki fragment. This chain is Flap endonuclease Xni, found in Yersinia pseudotuberculosis serotype I (strain IP32953).